The chain runs to 517 residues: Ribose import ATP-binding protein RbsA 1 (517 aa).

ABC transporter domains lie at 11 to 251 (LEMR…VGRD) and 263 to 507 (YDPG…ALAT). 43-50 (GENGAGKS) contributes to the ATP binding site.

It belongs to the ABC transporter superfamily. Ribose importer (TC 3.A.1.2.1) family. As to quaternary structure, the complex is composed of an ATP-binding protein (RbsA), two transmembrane proteins (RbsC) and a solute-binding protein (RbsB).

It is found in the cell inner membrane. The catalysed reaction is D-ribose(out) + ATP + H2O = D-ribose(in) + ADP + phosphate + H(+). Part of the ABC transporter complex RbsABC involved in ribose import. Responsible for energy coupling to the transport system. The sequence is that of Ribose import ATP-binding protein RbsA 1 from Burkholderia ambifaria (strain ATCC BAA-244 / DSM 16087 / CCUG 44356 / LMG 19182 / AMMD) (Burkholderia cepacia (strain AMMD)).